The following is a 283-amino-acid chain: DegV domain-containing protein lmo2514 (283 aa).

Residues 5-282 form the DegV domain; the sequence is IAVVTDSTTY…EGALGLTWSI (278 aa). 2 residues coordinate hexadecanoate: serine 63 and serine 96.

Functionally, may bind long-chain fatty acids, such as palmitate, and may play a role in lipid transport or fatty acid metabolism. In Listeria monocytogenes serovar 1/2a (strain ATCC BAA-679 / EGD-e), this protein is DegV domain-containing protein lmo2514.